We begin with the raw amino-acid sequence, 176 residues long: Isopentenyl-diphosphate Delta-isomerase 1 (176 aa).

2 residues coordinate Mn(2+): H23 and H30. Positions 28-162 (HLHRAFSCFI…EEFCTPWFKK (135 aa)) constitute a Nudix hydrolase domain. C65 is a catalytic residue. C65 lines the Mg(2+) pocket. H67 serves as a coordination point for Mn(2+). E85 provides a ligand contact to Mg(2+). Positions 112 and 114 each coordinate Mn(2+). E114 is an active-site residue.

It belongs to the IPP isomerase type 1 family. As to quaternary structure, homodimer. The cofactor is Mg(2+). Requires Mn(2+) as cofactor.

It is found in the cytoplasm. It carries out the reaction isopentenyl diphosphate = dimethylallyl diphosphate. It functions in the pathway isoprenoid biosynthesis; dimethylallyl diphosphate biosynthesis; dimethylallyl diphosphate from isopentenyl diphosphate: step 1/1. Its function is as follows. Catalyzes the 1,3-allylic rearrangement of the homoallylic substrate isopentenyl (IPP) to its highly electrophilic allylic isomer, dimethylallyl diphosphate (DMAPP). This Photorhabdus laumondii subsp. laumondii (strain DSM 15139 / CIP 105565 / TT01) (Photorhabdus luminescens subsp. laumondii) protein is Isopentenyl-diphosphate Delta-isomerase 1.